The chain runs to 154 residues: Superoxide dismutase [Cu-Zn] (154 aa).

Cu cation is bound by residues H47, H49, and H64. C58 and C147 form a disulfide bridge. H64, H72, H81, and D84 together coordinate Zn(2+). Residue H121 participates in Cu cation binding. Position 144 (R144) interacts with substrate.

Belongs to the Cu-Zn superoxide dismutase family. As to quaternary structure, homodimer. Cu cation serves as cofactor. Requires Zn(2+) as cofactor.

It is found in the cytoplasm. It catalyses the reaction 2 superoxide + 2 H(+) = H2O2 + O2. Destroys radicals which are normally produced within the cells and which are toxic to biological systems. This is Superoxide dismutase [Cu-Zn] (sodC) from Aspergillus fumigatus (strain ATCC MYA-4609 / CBS 101355 / FGSC A1100 / Af293) (Neosartorya fumigata).